A 250-amino-acid polypeptide reads, in one-letter code: Probable transcriptional regulatory protein Mmc1_0479 (250 aa).

The protein belongs to the TACO1 family.

It is found in the cytoplasm. This is Probable transcriptional regulatory protein Mmc1_0479 from Magnetococcus marinus (strain ATCC BAA-1437 / JCM 17883 / MC-1).